Reading from the N-terminus, the 294-residue chain is MSTVTPSAPTLIIVSGLSGSGKSVALKTFEDQDYYCSDNLPINLLPDFVRSLLANHDGSAPRRLAVGIDVRGQADLSQLGDWRQLAADAGVDVKVLFFEASDETLLKRYADTRRRHPLSQLGLSLPEAIARERELTAPLRREADAVIDTSSLNVHQLRRRIITEFTMDHATGLSLLFESFAYKRGVPAEADFVFDARVLPNPHWDPDLRALSGREPGVRDYLEAQPDVQRYLAQLMDFLDTWLPKLGDGTRSYVTVAFGCTGGKHRSVFLAERLARHAREMGWEDVATYHREQD.

Residue 16–23 participates in ATP binding; it reads GLSGSGKS. Residue 69-72 participates in GTP binding; sequence DVRG.

The protein belongs to the RapZ-like family.

Functionally, displays ATPase and GTPase activities. The sequence is that of Nucleotide-binding protein Smlt1108 from Stenotrophomonas maltophilia (strain K279a).